A 296-amino-acid polypeptide reads, in one-letter code: MSAHIINGTEIAAAIREEIRSEVTALKTKAGIVPGLATVLVGDDPASHSYVDSKIKMCQNLGIYSEHHPLPQNATNEDLLTLIAKLNADPKISGILVQVPLPAQISESLVLNAINPDKDVDGFHPVNVGRMCLGEPCFLPCTPHGVQELLIRSGIKIEGTHVVIVGRSNLVGKPLANILLQKAPGANATVTICHSGTKNLPEITRQADILVAAMGKPKFITADMVREGAVVIDVGTTCIGYTPEGKRILSGDVDFEEVKEKAFAITPVPKGVGPMTIIMLMLNTLTAAKRAVGLIK.

NADP(+) is bound by residues 166-168, Ser-195, and Thr-236; that span reads GRS.

The protein belongs to the tetrahydrofolate dehydrogenase/cyclohydrolase family. Homodimer.

The catalysed reaction is (6R)-5,10-methylene-5,6,7,8-tetrahydrofolate + NADP(+) = (6R)-5,10-methenyltetrahydrofolate + NADPH. The enzyme catalyses (6R)-5,10-methenyltetrahydrofolate + H2O = (6R)-10-formyltetrahydrofolate + H(+). It functions in the pathway one-carbon metabolism; tetrahydrofolate interconversion. Functionally, catalyzes the oxidation of 5,10-methylenetetrahydrofolate to 5,10-methenyltetrahydrofolate and then the hydrolysis of 5,10-methenyltetrahydrofolate to 10-formyltetrahydrofolate. In Dehalococcoides mccartyi (strain CBDB1), this protein is Bifunctional protein FolD.